A 358-amino-acid polypeptide reads, in one-letter code: Phospho-N-acetylmuramoyl-pentapeptide-transferase (358 aa).

9 helical membrane-spanning segments follow: residues 13-35, 81-101, 106-126, 142-162, 171-191, 201-221, 228-248, 268-290, and 336-356; these read LLIL…IFIG, MGGV…NINL, LFLL…DDFL, FFLQ…KDLI, SWQI…LVGI, LDGL…TEIL, LIIF…FLKY, ILGS…GIFI, and IVEN…VLKI.

Belongs to the glycosyltransferase 4 family. MraY subfamily. Mg(2+) serves as cofactor.

It is found in the cell inner membrane. It catalyses the reaction UDP-N-acetyl-alpha-D-muramoyl-L-alanyl-gamma-D-glutamyl-meso-2,6-diaminopimeloyl-D-alanyl-D-alanine + di-trans,octa-cis-undecaprenyl phosphate = di-trans,octa-cis-undecaprenyl diphospho-N-acetyl-alpha-D-muramoyl-L-alanyl-D-glutamyl-meso-2,6-diaminopimeloyl-D-alanyl-D-alanine + UMP. It functions in the pathway cell wall biogenesis; peptidoglycan biosynthesis. Functionally, catalyzes the initial step of the lipid cycle reactions in the biosynthesis of the cell wall peptidoglycan: transfers peptidoglycan precursor phospho-MurNAc-pentapeptide from UDP-MurNAc-pentapeptide onto the lipid carrier undecaprenyl phosphate, yielding undecaprenyl-pyrophosphoryl-MurNAc-pentapeptide, known as lipid I. In Prochlorococcus marinus (strain MIT 9312), this protein is Phospho-N-acetylmuramoyl-pentapeptide-transferase.